Here is a 41-residue protein sequence, read N- to C-terminus: uncharacterized protein (41 aa).

This is an uncharacterized protein from Bacillus subtilis (strain 168).